A 180-amino-acid polypeptide reads, in one-letter code: Photosystem II extrinsic protein V (180 aa).

Positions 1–40 (MFSKAFSFQKVFAPARRRLLVLLLAALMAGFGWGLAPVFA) are cleaved as a signal peptide. The heme c site is built by Cys73, Cys76, His77, and His128.

Belongs to the cytochrome c family. PsbV subfamily. As to quaternary structure, PSII is composed of 1 copy each of membrane proteins PsbA, PsbB, PsbC, PsbD, PsbE, PsbF, PsbH, PsbI, PsbJ, PsbK, PsbL, PsbM, PsbT, PsbX, PsbY, PsbZ, Psb30/Ycf12, peripheral proteins PsbO, CyanoQ (PsbQ), PsbU, PsbV and a large number of cofactors. It forms dimeric complexes. Requires heme c as cofactor.

The protein resides in the cellular thylakoid membrane. Its function is as follows. One of the extrinsic, lumenal subunits of photosystem II (PSII). PSII is a light-driven water plastoquinone oxidoreductase, using light energy to abstract electrons from H(2)O, generating a proton gradient subsequently used for ATP formation. The extrinsic proteins stabilize the structure of photosystem II oxygen-evolving complex (OEC), the ion environment of oxygen evolution and protect the OEC against heat-induced inactivation. Low-potential cytochrome c that plays a role in the OEC of PSII. This chain is Photosystem II extrinsic protein V, found in Synechococcus sp. (strain JA-2-3B'a(2-13)) (Cyanobacteria bacterium Yellowstone B-Prime).